The primary structure comprises 156 residues: ATP synthase subunit b (156 aa).

Residues phenylalanine 7–proline 27 form a helical membrane-spanning segment.

It belongs to the ATPase B chain family. F-type ATPases have 2 components, F(1) - the catalytic core - and F(0) - the membrane proton channel. F(1) has five subunits: alpha(3), beta(3), gamma(1), delta(1), epsilon(1). F(0) has three main subunits: a(1), b(2) and c(10-14). The alpha and beta chains form an alternating ring which encloses part of the gamma chain. F(1) is attached to F(0) by a central stalk formed by the gamma and epsilon chains, while a peripheral stalk is formed by the delta and b chains.

Its subcellular location is the cell inner membrane. Functionally, f(1)F(0) ATP synthase produces ATP from ADP in the presence of a proton or sodium gradient. F-type ATPases consist of two structural domains, F(1) containing the extramembraneous catalytic core and F(0) containing the membrane proton channel, linked together by a central stalk and a peripheral stalk. During catalysis, ATP synthesis in the catalytic domain of F(1) is coupled via a rotary mechanism of the central stalk subunits to proton translocation. Its function is as follows. Component of the F(0) channel, it forms part of the peripheral stalk, linking F(1) to F(0). The polypeptide is ATP synthase subunit b (Cupriavidus metallidurans (strain ATCC 43123 / DSM 2839 / NBRC 102507 / CH34) (Ralstonia metallidurans)).